A 366-amino-acid chain; its full sequence is MATSISLEDSITIFEKDQNSDVLMSWCFPTITEDLKSVILNRTSLLQEKISLQFSFSKFKNSWIYIYTTSVETQQINKEDGSITQINVPDSLKRVVAFSLVLVRNQFNPEKYGSLAQIMSSVYKQTGDCSKLLECQLRVFNRGQFDVGSMGKFVDSSFDVRRSYLQTSIKDIIQLFGEEIILIWSAMAMKKRIVVYSEKLSSLLKVIRALPLFVFHRQNWNILRPFVTISDLELKDLVSTGVYCAGFTDSSIKSREDLYDILVDLSSKEVSVSSQSKDQFILGSFHKDVLRFLLDSLDDEEITDQNVIKGLNLKMKELLTKLESLKETNEETGKSSITLESLETRKLPNGMSTFLFNIANAEGLNG.

A uDENN domain is found at 1–147 (MATSISLEDS…RVFNRGQFDV (147 aa)). The region spanning 169-309 (IKDIIQLFGE…EEITDQNVIK (141 aa)) is the cDENN domain. The dDENN domain maps to 311–366 (LNLKMKELLTKLESLKETNEETGKSSITLESLETRKLPNGMSTFLFNIANAEGLNG).

The protein belongs to the DENND10 family.

It localises to the late endosome. Functionally, guanine nucleotide exchange factor (GEF) which may be involved in the regulation of homeostasis of late endocytic pathway, including endosomal positioning, maturation and secretion. This Dictyostelium discoideum (Social amoeba) protein is DENN domain-containing protein 10 (dennd10).